Consider the following 349-residue polypeptide: Phenylalanine--tRNA ligase alpha subunit (349 aa).

E258 provides a ligand contact to Mg(2+).

The protein belongs to the class-II aminoacyl-tRNA synthetase family. Phe-tRNA synthetase alpha subunit type 1 subfamily. In terms of assembly, tetramer of two alpha and two beta subunits. It depends on Mg(2+) as a cofactor.

It is found in the cytoplasm. It carries out the reaction tRNA(Phe) + L-phenylalanine + ATP = L-phenylalanyl-tRNA(Phe) + AMP + diphosphate + H(+). The polypeptide is Phenylalanine--tRNA ligase alpha subunit (Rickettsia africae (strain ESF-5)).